The sequence spans 145 residues: Secreted LysM effector Vd2LysM (145 aa).

An N-terminal signal peptide occupies residues 1–18 (MRPDVFVLFTAFLGPAAA). LysM domains are found at residues 31–75 (GWYI…KIKV) and 96–140 (GWYH…DIVV).

This sequence belongs to the secreted LysM effector family. As to quaternary structure, forms homodimers in a chitin-independent manner through interactions at the N-termini of EPL2 monomers. Homodimers are further polymerized in a chitin-dependent manner.

Its function is as follows. Secreted effector that enables the plant pathogenic fungus to manipulate host defenses for successful infection. Binds chitin, suppresses chitin-induced immune responses and protects hyphae against degradation by plant hydrolytic enzymes. Chitin-induced polymerization of homodimers forms a contiguous ELP2 highly oligomeric super-complexe that may precipitate at infection sites to eliminate chitin oligomers, and thus suppress the activation of chitin-induced plant immunity. The polypeptide is Secreted LysM effector Vd2LysM (Verticillium dahliae (strain VdLs.17 / ATCC MYA-4575 / FGSC 10137) (Verticillium wilt)).